We begin with the raw amino-acid sequence, 710 residues long: Early transcription factor 82 kDa subunit (710 aa).

The protein belongs to the poxviridae VETF large subunit family. In terms of assembly, heterodimer of a 70 kDa and a 82 kDa subunit. Part of the early transcription complex composed of ETF, RAP94/OPG109, and the DNA-directed RNA polymerase.

It localises to the virion. Acts with RNA polymerase to initiate transcription from early gene promoters. Is recruited by the RPO-associated protein of 94 kDa RAP94/OPG109 to form the early transcription complex, which also contains the core RNA polymerase. ETF heterodimer binds to early gene promoters. In Homo sapiens (Human), this protein is Early transcription factor 82 kDa subunit (OPG133).